We begin with the raw amino-acid sequence, 424 residues long: FeMo cofactor biosynthesis protein NifB (424 aa).

Residues 12–261 enclose the Radical SAM core domain; it reads NDSSRHTYGR…PQMKHCARCR (250 aa). The [4Fe-4S] cluster site is built by C30, C34, and C37. The S-adenosyl-L-methionine site is built by G84, T136, and V188. [4Fe-4S] cluster-binding residues include C257 and C260.

It belongs to the radical SAM superfamily. NifB family. Monomer. It depends on [4Fe-4S] cluster as a cofactor.

The protein operates within cofactor biosynthesis; Fe-Mo cofactor biosynthesis. Its function is as follows. Involved in the biosynthesis of the iron-molybdenum cofactor (FeMo-co or M-cluster) found in the dinitrogenase enzyme of the nitrogenase complex in nitrogen-fixing microorganisms. NifB catalyzes the crucial step of radical SAM-dependent carbide insertion that occurs concomitant with the insertion of a 9th sulfur and the rearrangement/coupling of two [4Fe-4S] clusters into a [8Fe-9S-C] cluster, the precursor to the M-cluster. The chain is FeMo cofactor biosynthesis protein NifB from Chlorobaculum tepidum (strain ATCC 49652 / DSM 12025 / NBRC 103806 / TLS) (Chlorobium tepidum).